Consider the following 406-residue polypeptide: Putative cyclin-F3-2 (406 aa).

The segment at 1-107 (MARPRTRSVA…PGAAGGPWQL (107 aa)) is disordered. 2 stretches are compositionally biased toward low complexity: residues 11 to 21 (RMEATAAAAAA) and 29 to 57 (NPDG…NAGE).

This sequence belongs to the cyclin family. Cyclin F subfamily.

This chain is Putative cyclin-F3-2 (CYCF3-2), found in Oryza sativa subsp. japonica (Rice).